The chain runs to 521 residues: Peroxisomal membrane protein PEX23 (521 aa).

A disordered region spans residues 1 to 26 (MPTDPNSNPVSKAGLTPSSINSNISE). Residues Asn23 and Asn53 are each glycosylated (N-linked (GlcNAc...) asparagine). 2 consecutive transmembrane segments (helical) span residues 111–128 (SYISVLLVTTATLFILYF) and 133–150 (IYLGHLSIVGLIFLYSIF). Asn189 is a glycosylation site (N-linked (GlcNAc...) asparagine). A helical transmembrane segment spans residues 198–217 (LLFTSIFLSPGYILVCYLLF). Asn279 carries an N-linked (GlcNAc...) asparagine glycan. Residues 425–446 (VSPGDDSSTDSASLPHSASETV) are disordered. The segment covering 429–446 (DDSSTDSASLPHSASETV) has biased composition (polar residues). Asn463 and Asn467 each carry an N-linked (GlcNAc...) asparagine glycan. The disordered stretch occupies residues 465 to 486 (SGNITTSAETAPDSAGTAKKRK).

This sequence belongs to the PEX28-32 family. PEX32 subfamily.

It localises to the endoplasmic reticulum membrane. In terms of biological role, with PEX29, contributes to the formation of endoplasmic reticulum-mitochondria junctions which are important for mitochondrial function. Involved in lipid dropplets formation. The sequence is that of Peroxisomal membrane protein PEX23 from Ogataea parapolymorpha (strain ATCC 26012 / BCRC 20466 / JCM 22074 / NRRL Y-7560 / DL-1) (Yeast).